Consider the following 123-residue polypeptide: Small ribosomal subunit protein uS12 (123 aa).

3-methylthioaspartic acid is present on D89.

This sequence belongs to the universal ribosomal protein uS12 family. In terms of assembly, part of the 30S ribosomal subunit. Contacts proteins S8 and S17. May interact with IF1 in the 30S initiation complex.

With S4 and S5 plays an important role in translational accuracy. Its function is as follows. Interacts with and stabilizes bases of the 16S rRNA that are involved in tRNA selection in the A site and with the mRNA backbone. Located at the interface of the 30S and 50S subunits, it traverses the body of the 30S subunit contacting proteins on the other side and probably holding the rRNA structure together. The combined cluster of proteins S8, S12 and S17 appears to hold together the shoulder and platform of the 30S subunit. The sequence is that of Small ribosomal subunit protein uS12 from Mesorhizobium japonicum (strain LMG 29417 / CECT 9101 / MAFF 303099) (Mesorhizobium loti (strain MAFF 303099)).